A 1036-amino-acid chain; its full sequence is Lethal(2) giant larvae protein homolog 1 (1036 aa).

WD repeat units lie at residues 38-71 (SALA…FTGL), 78-119 (VTQM…GLSF), 139-175 (VTVV…GQTL), 199-233 (SLQG…DNVF), 239-271 (LESL…GSPP), 289-331 (AINK…ETLV), 339-373 (VIDF…VLDL), 395-473 (TCSA…YKLS), 517-592 (QKVA…RMLI), and 601-662 (TAVT…LRQS). Ser662 bears the Phosphoserine mark. Positions 667-677 (RKSRVSGKKRT) are enriched in basic residues. The tract at residues 667–688 (RKSRVSGKKRTPAASSKLQEAN) is disordered. A compositionally biased stretch (polar residues) spans 679–688 (AASSKLQEAN). WD repeat units follow at residues 722–782 (VRCL…KEVQ), 791–843 (AIAV…VSAK), 848–901 (LTAH…VHYS), and 915–938 (VFTR…SLSA). The residue at position 957 (Thr957) is a Phosphothreonine. Ser964, Ser982, and Ser989 each carry phosphoserine. The segment at 980–1002 (PESCEGSPSSAHSKRADTMEPPE) is disordered.

The protein belongs to the WD repeat L(2)GL family. Associated with nonmuscle myosin II heavy chain. Interacts with PRKCI/aPKC, PARD6B/Par-6 and PARD6A. Interacts with STX4A. Interacts with RAB10 (GDP-bound form); the interaction is direct and promotes RAB10 association with membranes and activation through competition with the Rab inhibitor GDI1. Interacts with DCAF1. In terms of processing, phosphorylated by PRKCI on at least one of the following Ser residues: Ser 654, Ser-658, Ser-662, Ser-669 and Ser-672. Phosphorylation is important for appropriated cell polarization.

It is found in the early endosome membrane. The protein localises to the golgi apparatus. The protein resides in the trans-Golgi network membrane. Its subcellular location is the golgi apparatus membrane. It localises to the cell projection. It is found in the axon. The protein localises to the cytoplasm. The protein resides in the cytoskeleton. Cortical cytoskeleton protein found in a complex involved in maintaining cell polarity and epithelial integrity. Involved in the regulation of mitotic spindle orientation, proliferation, differentiation and tissue organization of neuroepithelial cells. Involved in axonogenesis through RAB10 activation thereby regulating vesicular membrane trafficking toward the axonal plasma membrane. The sequence is that of Lethal(2) giant larvae protein homolog 1 (Llgl1) from Mus musculus (Mouse).